Here is a 297-residue protein sequence, read N- to C-terminus: Nuclear transcription factor Y subunit B-11 (297 aa).

Residues 1–25 (MKSRKSYGHLLSPVGSPPLDNESGE) are disordered. A DNA-binding region spans residues 63-69 (LPIANVS). A subunit association domain (SAD) region spans residues 90 to 101 (VQECVSEFISFV).

It belongs to the NFYB/HAP3 subunit family. As to quaternary structure, heterotrimeric transcription factor composed of three components, NF-YA, NF-YB and NF-YC. NF-YB and NF-YC must interact and dimerize for NF-YA association and DNA binding. Interacts with NFYC2, NFYC4 and NFYC6. Expressed in roots, culms, nodes, leaf blades, leaf sheaths and young panicles.

The protein localises to the nucleus. Its subcellular location is the cytoplasm. Its function is as follows. Probable transcription factor involved in the regulation of flowering time under long day (LD) conditions. Functions as a repressor of flowering, independently of HD1 and GHD7. Controls flowering time by negatively regulating the expression of EHD1 and HD3A. Regulates plant height by promoting cell elongation in the internodes. Component of the NF-Y/HAP transcription factor complex. The protein is Nuclear transcription factor Y subunit B-11 (HD5) of Oryza sativa subsp. japonica (Rice).